Reading from the N-terminus, the 850-residue chain is DNA polymerase I (850 aa).

The region spanning 1 to 288 (MKLVIFDGNS…SIIKRLGLSE (288 aa)) is the 5'-3' exonuclease domain. Positions 470 to 850 (VDRDALIQYT…KEGLNWYETK (381 aa)) are polymerase.

It belongs to the DNA polymerase type-A family.

It catalyses the reaction DNA(n) + a 2'-deoxyribonucleoside 5'-triphosphate = DNA(n+1) + diphosphate. Functionally, in addition to polymerase activity, this DNA polymerase exhibits 3'-5' and 5'-3' exonuclease activity. The protein is DNA polymerase I (polA) of Caldicellulosiruptor bescii (strain ATCC BAA-1888 / DSM 6725 / KCTC 15123 / Z-1320) (Anaerocellum thermophilum).